Here is a 78-residue protein sequence, read N- to C-terminus: Small ribosomal subunit protein bS16c (78 aa).

This sequence belongs to the bacterial ribosomal protein bS16 family.

The protein resides in the plastid. It localises to the chloroplast. The protein is Small ribosomal subunit protein bS16c of Adiantum capillus-veneris (Maidenhair fern).